The sequence spans 583 residues: Long-chain-fatty-acid--AMP ligase FadD26 (583 aa).

Belongs to the ATP-dependent AMP-binding enzyme family.

The catalysed reaction is holo-[(phenol)carboxyphthiodiolenone synthase] + a long-chain fatty acid + ATP = a long-chain fatty acyl-[(phenol)carboxyphthiodiolenone synthase] + AMP + diphosphate. It catalyses the reaction eicosanoate + holo-[(phenol)carboxyphthiodiolenone synthase] + ATP = icosanoyl-[(phenol)carboxyphthiodiolenone synthase] + AMP + diphosphate. It carries out the reaction holo-[(phenol)carboxyphthiodiolenone synthase] + docosanoate + ATP = docosanoyl-[(phenol)carboxyphthiodiolenone synthase] + AMP + diphosphate. Its pathway is lipid metabolism; fatty acid biosynthesis. In terms of biological role, catalyzes the activation of long-chain fatty acids as acyl-adenylates (acyl-AMP), which are then transferred to the multifunctional polyketide synthase PpsA for further chain extension. Catalyzes the adenylation of the long-chain fatty acids eicosanoate (C20) or docosanoate (C22), and potentially the very-long-chain fatty acid lignocerate (C24). Involved in the biosynthesis of phthiocerol dimycocerosate (DIM A) and phthiodiolone dimycocerosate (DIM B). In Mycobacterium tuberculosis (strain CDC 1551 / Oshkosh), this protein is Long-chain-fatty-acid--AMP ligase FadD26 (fadD26).